The primary structure comprises 466 residues: 3-isopropylmalate dehydratase large subunit (466 aa).

[4Fe-4S] cluster-binding residues include Cys347, Cys407, and Cys410.

Belongs to the aconitase/IPM isomerase family. LeuC type 1 subfamily. In terms of assembly, heterodimer of LeuC and LeuD. [4Fe-4S] cluster is required as a cofactor.

The enzyme catalyses (2R,3S)-3-isopropylmalate = (2S)-2-isopropylmalate. Its pathway is amino-acid biosynthesis; L-leucine biosynthesis; L-leucine from 3-methyl-2-oxobutanoate: step 2/4. Functionally, catalyzes the isomerization between 2-isopropylmalate and 3-isopropylmalate, via the formation of 2-isopropylmaleate. The protein is 3-isopropylmalate dehydratase large subunit of Escherichia coli O17:K52:H18 (strain UMN026 / ExPEC).